The following is a 199-amino-acid chain: Elongation factor Ts (199 aa).

The segment at 81–84 is involved in Mg(2+) ion dislocation from EF-Tu; that stretch reads TDFV.

This sequence belongs to the EF-Ts family.

It localises to the cytoplasm. Associates with the EF-Tu.GDP complex and induces the exchange of GDP to GTP. It remains bound to the aminoacyl-tRNA.EF-Tu.GTP complex up to the GTP hydrolysis stage on the ribosome. This chain is Elongation factor Ts, found in Thermotoga petrophila (strain ATCC BAA-488 / DSM 13995 / JCM 10881 / RKU-1).